The primary structure comprises 155 residues: MLLTTSRKPSQRTRSFSQRLSRIMGWRYINRGKMSLRDVLIEARGPVAVVSERHGNPARITFLDERGGERGYILFNPSFEMKKPELADKAVRVSSCPPGSEGLCNLMGLEVDESSSRDAWSIRTDEEYAWVMELMDARGTPAGFKLLIRDFRVGE.

The region spanning 1–155 (MLLTTSRKPS…LLIRDFRVGE (155 aa)) is the Brix domain.

In terms of biological role, probably involved in the biogenesis of the ribosome. In Methanothermobacter thermautotrophicus (strain ATCC 29096 / DSM 1053 / JCM 10044 / NBRC 100330 / Delta H) (Methanobacterium thermoautotrophicum), this protein is Probable Brix domain-containing ribosomal biogenesis protein.